Reading from the N-terminus, the 383-residue chain is Lipid-A-disaccharide synthase (383 aa).

It belongs to the LpxB family.

It catalyses the reaction 2-N,3-O-bis[(3R)-3-hydroxytetradecanoyl]-alpha-D-glucosaminyl 1-phosphate + UDP-2-N,3-O-bis[(3R)-3-hydroxytetradecanoyl]-alpha-D-glucosamine = lipid A disaccharide (E. coli) + UDP + H(+). It carries out the reaction a lipid X + a UDP-2-N,3-O-bis[(3R)-3-hydroxyacyl]-alpha-D-glucosamine = a lipid A disaccharide + UDP + H(+). It functions in the pathway glycolipid biosynthesis; lipid IV(A) biosynthesis; lipid IV(A) from (3R)-3-hydroxytetradecanoyl-[acyl-carrier-protein] and UDP-N-acetyl-alpha-D-glucosamine: step 5/6. Its function is as follows. Condensation of UDP-2,3-diacylglucosamine and 2,3-diacylglucosamine-1-phosphate to form lipid A disaccharide, a precursor of lipid A, a phosphorylated glycolipid that anchors the lipopolysaccharide to the outer membrane of the cell. In Pectobacterium atrosepticum (strain SCRI 1043 / ATCC BAA-672) (Erwinia carotovora subsp. atroseptica), this protein is Lipid-A-disaccharide synthase.